The following is a 461-amino-acid chain: Protein ultraspiracle homolog (461 aa).

Positions 1 to 112 are modulating; sequence MSSVAKKDKR…NHPLSGSKHL (112 aa). The interval 26-51 is disordered; sequence PAPHQQQSMPSSQPSNFLQPLATPST. The segment covering 27–40 has biased composition (low complexity); sequence APHQQQSMPSSQPS. Positions 41–51 are enriched in polar residues; the sequence is NFLQPLATPST. NR C4-type zinc fingers lie at residues 113–133 and 149–173; these read CSICGDRASGKHYGVYSCEGC and CREDRNCIIDKRQRNRCQYCRYQKC. The segment at residues 113-185 is a DNA-binding region (nuclear receptor); the sequence is CSICGDRASG…CGMKREAVQE (73 aa). A hinge region spans residues 185-192; sequence EERQRAAR. The NR LBD domain maps to 203–452; it reads VQELSIERLL…SYIHDALRNH (250 aa).

Belongs to the nuclear hormone receptor family. NR2 subfamily. In terms of assembly, heterodimer of USP and ECR. Only the heterodimer is capable of high-affinity binding to ecdysone.

It is found in the nucleus. Receptor for ecdysone. May be an important modulator of insect metamorphosis. The chain is Protein ultraspiracle homolog (USP) from Manduca sexta (Tobacco hawkmoth).